Here is a 437-residue protein sequence, read N- to C-terminus: Glucose-1-phosphate adenylyltransferase (437 aa).

Alpha-D-glucose 1-phosphate contacts are provided by residues tyrosine 113, glycine 179, 194-195 (EK), and serine 212.

This sequence belongs to the bacterial/plant glucose-1-phosphate adenylyltransferase family. Homotetramer.

The catalysed reaction is alpha-D-glucose 1-phosphate + ATP + H(+) = ADP-alpha-D-glucose + diphosphate. It functions in the pathway glycan biosynthesis; glycogen biosynthesis. In terms of biological role, involved in the biosynthesis of ADP-glucose, a building block required for the elongation reactions to produce glycogen. Catalyzes the reaction between ATP and alpha-D-glucose 1-phosphate (G1P) to produce pyrophosphate and ADP-Glc. The chain is Glucose-1-phosphate adenylyltransferase from Haemophilus influenzae (strain ATCC 51907 / DSM 11121 / KW20 / Rd).